The sequence spans 203 residues: Thymidylate kinase (203 aa).

Position 7–14 (7–14 (GGEGAGKT)) interacts with ATP.

This sequence belongs to the thymidylate kinase family.

It catalyses the reaction dTMP + ATP = dTDP + ADP. Phosphorylation of dTMP to form dTDP in both de novo and salvage pathways of dTTP synthesis. The polypeptide is Thymidylate kinase (tmk) (Chlamydia muridarum (strain MoPn / Nigg)).